A 109-amino-acid polypeptide reads, in one-letter code: Nucleoid-associated protein CC_0268 (109 aa).

The protein belongs to the YbaB/EbfC family. As to quaternary structure, homodimer.

It is found in the cytoplasm. Its subcellular location is the nucleoid. Binds to DNA and alters its conformation. May be involved in regulation of gene expression, nucleoid organization and DNA protection. This Caulobacter vibrioides (strain ATCC 19089 / CIP 103742 / CB 15) (Caulobacter crescentus) protein is Nucleoid-associated protein CC_0268.